A 79-amino-acid polypeptide reads, in one-letter code: uncharacterized protein (79 aa).

The helical transmembrane segment at 53-73 (LFFAYMVAYIGFGILSIGMIV) threads the bilayer.

It is found in the membrane. This is an uncharacterized protein from Escherichia coli O157:H7.